A 270-amino-acid polypeptide reads, in one-letter code: DNA packaging protein OPG160 (270 aa).

Gly25–Thr32 is a binding site for ATP.

This sequence belongs to the orthopoxvirus OPG160 protein family. Interacts with protein OPG137.

In terms of biological role, participates in viral DNA packaging and virion morphogenesis. The polypeptide is DNA packaging protein OPG160 (OPG160) (Variola virus (isolate Human/India/Ind3/1967) (VARV)).